The sequence spans 1778 residues: Internalin I (1778 aa).

The signal sequence occupies residues Met1 to Ala28. Residues Asp36–Lys101 are disordered. The span at Ile51 to Ala62 shows a compositional bias: acidic residues. Positions Glu63–Glu88 are enriched in basic and acidic residues. 27 LRR repeats span residues Ala155–Gln179, Asn183–Val204, Asn205–Val227, Asn228–Pro250, Val251–Gly272, Glu277–Pro298, Lys299–Thr321, Lys322–Ser344, Glu345–Pro367, Asn368–Pro389, Lys390–Pro412, Gln413–Pro434, Lys435–Pro456, Arg457–Pro478, Leu479–Pro500, Ser501–Pro522, Ser523–Pro544, Asn545–Pro566, Lys567–Pro588, Ser589–Pro610, Asp611–Pro632, Asn633–Asp653, Lys657–Ser678, Asn685–Ser707, Arg708–Thr729, Asn730–Glu751, and Asn752–Val773. Positions Thr785–Glu872 constitute an LRRCT domain. 3 MucBP domains span residues Asp1510–Val1569, Ala1575–Ile1634, and Ser1644–Val1705. Positions Ser1716–Ser1742 are disordered. Polar residues predominate over residues Lys1725 to Ser1742. An LPXTG sorting signal motif is present at residues Leu1743–Gly1747. Thr1746 is modified (pentaglycyl murein peptidoglycan amidated threonine). A propeptide spans Gly1747–Gln1778 (removed by sortase).

Belongs to the internalin family.

It is found in the secreted. The protein localises to the cell wall. In terms of biological role, a role in virulence could not be demonstrated. The protein is Internalin I (inlI) of Listeria monocytogenes serovar 1/2a (strain ATCC BAA-679 / EGD-e).